The chain runs to 126 residues: Small ribosomal subunit protein uS12 (126 aa).

The segment covering M1 to K16 has biased composition (polar residues). Residues M1 to L24 are disordered. Position 89 is a 3-methylthioaspartic acid (D89).

The protein belongs to the universal ribosomal protein uS12 family. Part of the 30S ribosomal subunit. Contacts proteins S8 and S17. May interact with IF1 in the 30S initiation complex.

In terms of biological role, with S4 and S5 plays an important role in translational accuracy. Functionally, interacts with and stabilizes bases of the 16S rRNA that are involved in tRNA selection in the A site and with the mRNA backbone. Located at the interface of the 30S and 50S subunits, it traverses the body of the 30S subunit contacting proteins on the other side and probably holding the rRNA structure together. The combined cluster of proteins S8, S12 and S17 appears to hold together the shoulder and platform of the 30S subunit. The protein is Small ribosomal subunit protein uS12 of Elusimicrobium minutum (strain Pei191).